Reading from the N-terminus, the 181-residue chain is Probable nicotinate-nucleotide adenylyltransferase (181 aa).

Belongs to the NadD family.

The enzyme catalyses nicotinate beta-D-ribonucleotide + ATP + H(+) = deamido-NAD(+) + diphosphate. Its pathway is cofactor biosynthesis; NAD(+) biosynthesis; deamido-NAD(+) from nicotinate D-ribonucleotide: step 1/1. Catalyzes the reversible adenylation of nicotinate mononucleotide (NaMN) to nicotinic acid adenine dinucleotide (NaAD). In Campylobacter jejuni subsp. jejuni serotype O:6 (strain 81116 / NCTC 11828), this protein is Probable nicotinate-nucleotide adenylyltransferase.